Consider the following 352-residue polypeptide: Holliday junction branch migration complex subunit RuvB (352 aa).

The large ATPase domain (RuvB-L) stretch occupies residues 1–182 (MRIELLNTPP…FGINSRFDYY (182 aa)). Residues Ile21, Arg22, Gly63, Lys66, Thr67, Thr68, 129–131 (EDF), Arg172, Tyr182, and Arg219 contribute to the ATP site. Thr67 contributes to the Mg(2+) binding site. The interval 183 to 253 (EPELLTRIII…IAMKTLECLE (71 aa)) is small ATPAse domain (RuvB-S). A head domain (RuvB-H) region spans residues 256–352 (EEGLDEMDKK…LPLFDESEAD (97 aa)). The DNA site is built by Arg292, Arg311, and Arg316.

The protein belongs to the RuvB family. In terms of assembly, homohexamer. Forms an RuvA(8)-RuvB(12)-Holliday junction (HJ) complex. HJ DNA is sandwiched between 2 RuvA tetramers; dsDNA enters through RuvA and exits via RuvB. An RuvB hexamer assembles on each DNA strand where it exits the tetramer. Each RuvB hexamer is contacted by two RuvA subunits (via domain III) on 2 adjacent RuvB subunits; this complex drives branch migration. In the full resolvosome a probable DNA-RuvA(4)-RuvB(12)-RuvC(2) complex forms which resolves the HJ.

The protein localises to the cytoplasm. It carries out the reaction ATP + H2O = ADP + phosphate + H(+). The RuvA-RuvB-RuvC complex processes Holliday junction (HJ) DNA during genetic recombination and DNA repair, while the RuvA-RuvB complex plays an important role in the rescue of blocked DNA replication forks via replication fork reversal (RFR). RuvA specifically binds to HJ cruciform DNA, conferring on it an open structure. The RuvB hexamer acts as an ATP-dependent pump, pulling dsDNA into and through the RuvAB complex. RuvB forms 2 homohexamers on either side of HJ DNA bound by 1 or 2 RuvA tetramers; 4 subunits per hexamer contact DNA at a time. Coordinated motions by a converter formed by DNA-disengaged RuvB subunits stimulates ATP hydrolysis and nucleotide exchange. Immobilization of the converter enables RuvB to convert the ATP-contained energy into a lever motion, pulling 2 nucleotides of DNA out of the RuvA tetramer per ATP hydrolyzed, thus driving DNA branch migration. The RuvB motors rotate together with the DNA substrate, which together with the progressing nucleotide cycle form the mechanistic basis for DNA recombination by continuous HJ branch migration. Branch migration allows RuvC to scan DNA until it finds its consensus sequence, where it cleaves and resolves cruciform DNA. In Chlorobium chlorochromatii (strain CaD3), this protein is Holliday junction branch migration complex subunit RuvB.